The sequence spans 164 residues: T-cell surface glycoprotein CD3 zeta chain (164 aa).

The first 21 residues, 1 to 21 (MKWKVSVLACILHVRFPGAEA), serve as a signal peptide directing secretion. Gln-22 carries the blocked amino end (Gln) modification. The Extracellular segment spans residues 22-30 (QSFGLLDPK). The chain crosses the membrane as a helical span at residues 31–51 (LCYLLDGILFIYGVIITALYL). Residues 52–164 (RAKFSRSAET…ALHMQTLAPR (113 aa)) are Cytoplasmic-facing. Ser-58 carries the phosphoserine modification. ITAM domains are found at residues 61-89 (TAAN…LEKK), 100-128 (QQRR…EIGT), and 131-159 (ERRR…LHMQ). 2 positions are modified to phosphotyrosine: Tyr-72 and Tyr-83. Over residues 87–96 (EKKRARDPEM) the composition is skewed to basic and acidic residues. A disordered region spans residues 87-111 (EKKRARDPEMGGKQQRRRNPQEGVY). Phosphotyrosine occurs at positions 111, 123, 142, and 153. Residues 124–143 (SEIGTKGERRRGKGHDGLYQ) are disordered.

Belongs to the CD3Z/FCER1G family. As to quaternary structure, the TCR-CD3 complex is composed of a CD3D/CD3E and a CD3G/CD3E heterodimers that preferentially associate with TCRalpha and TCRbeta, respectively, to form TCRalpha/CD3E/CD3G and TCRbeta/CD3G/CD3E trimers. In turn, the hexamer interacts with CD3Z homodimer to form the TCR-CD3 complex. Alternatively, TCRalpha and TCRbeta can be replaced by TCRgamma and TCRdelta. Interacts with SLA. Interacts with SLA2. Interacts with TRAT1. Interacts with DOCK2. Interacts with SHB. Interacts with ZAP70. Interacts (tyrosine phosphorylated) with SHC1 (via SH2 domain). Interacts with PTPRC. Interacts with CRK; this interaction regulates CD3Z phosphorylation. Interacts (on T cell side) with CD81, ICAM1 and CD9 at immunological synapses between antigen-presenting cells and T cells. Interacts with CD160. Interacts with LY6E. Interacts with LY6E. The signaling subunit of immunoglobulin gamma (IgG) Fc receptor complex. As a homodimer or a heterodimer with FCER1G, associates with the ligand binding subunit FCGR3A (via transmembrane domain); this interaction is a prerequisite for Fc receptor complex expression on the cell surface. Interacts with CD5. Phosphorylated on Tyr residues after T-cell receptor triggering by LCK in association with CD4/CD8. As to expression, CD3Z is expressed in normal lymphoid tissue and in peripheral blood mononuclear cells (PBMCs). Expressed also in retinal ganglion cells.

The protein resides in the cell membrane. In terms of biological role, part of the TCR-CD3 complex present on T-lymphocyte cell surface that plays an essential role in adaptive immune response. When antigen presenting cells (APCs) activate T-cell receptor (TCR), TCR-mediated signals are transmitted across the cell membrane by the CD3 chains CD3D, CD3E, CD3G and CD3Z. All CD3 chains contain immunoreceptor tyrosine-based activation motifs (ITAMs) in their cytoplasmic domain. Upon TCR engagement, these motifs become phosphorylated by Src family protein tyrosine kinases LCK and FYN, resulting in the activation of downstream signaling pathways. CD3Z ITAMs phosphorylation creates multiple docking sites for the protein kinase ZAP70 leading to ZAP70 phosphorylation and its conversion into a catalytically active enzyme. Plays an important role in intrathymic T-cell differentiation. Additionally, participates in the activity-dependent synapse formation of retinal ganglion cells (RGCs) in both the retina and dorsal lateral geniculate nucleus (dLGN). The chain is T-cell surface glycoprotein CD3 zeta chain (Cd247) from Mus musculus (Mouse).